Here is a 144-residue protein sequence, read N- to C-terminus: Lysozyme C II (144 aa).

The N-terminal stretch at 1-15 (MRAVVVLLLVAVASA) is a signal peptide. Residues 16–144 (KVYDRCELAR…LRSYVAGCGV (129 aa)) enclose the C-type lysozyme domain. 4 cysteine pairs are disulfide-bonded: Cys21-Cys142, Cys45-Cys130, Cys79-Cys95, and Cys91-Cys109. Residues Glu50 and Asp67 contribute to the active site.

It localises to the secreted. It catalyses the reaction Hydrolysis of (1-&gt;4)-beta-linkages between N-acetylmuramic acid and N-acetyl-D-glucosamine residues in a peptidoglycan and between N-acetyl-D-glucosamine residues in chitodextrins.. Functionally, lysozymes have primarily a bacteriolytic function; those in tissues and body fluids are associated with the monocyte-macrophage system and enhance the activity of immunoagents. Has antibacterial activity against the Gram positive bacterium P.citreus. Has no antibacterial activity against the Gram negative bacteria E.coli and Y.ruckeri. Does not have hemolytic activity against trout erythrocytes. The polypeptide is Lysozyme C II (Oncorhynchus mykiss (Rainbow trout)).